Here is a 283-residue protein sequence, read N- to C-terminus: Dihydropteroate synthase (283 aa).

The Pterin-binding domain maps to 18–274 (PKIMGIVNLT…DVKATADALK (257 aa)). Asparagine 25 lines the Mg(2+) pocket. Residues threonine 66, aspartate 99, asparagine 119, aspartate 190, lysine 227, and 262–264 (RVH) each bind (7,8-dihydropterin-6-yl)methyl diphosphate.

This sequence belongs to the DHPS family. As to quaternary structure, homodimer. Requires Mg(2+) as cofactor.

It catalyses the reaction (7,8-dihydropterin-6-yl)methyl diphosphate + 4-aminobenzoate = 7,8-dihydropteroate + diphosphate. It participates in cofactor biosynthesis; tetrahydrofolate biosynthesis; 7,8-dihydrofolate from 2-amino-4-hydroxy-6-hydroxymethyl-7,8-dihydropteridine diphosphate and 4-aminobenzoate: step 1/2. In terms of biological role, catalyzes the condensation of para-aminobenzoate (pABA) with 6-hydroxymethyl-7,8-dihydropterin diphosphate (DHPt-PP) to form 7,8-dihydropteroate (H2Pte), the immediate precursor of folate derivatives. In Neisseria meningitidis serogroup C, this protein is Dihydropteroate synthase (folP).